The primary structure comprises 196 residues: Penicillin-binding protein activator LpoB (196 aa).

The first 16 residues, 1-16 (MKKYLGIVLMALVIAG), serve as a signal peptide directing secretion. C17 carries N-palmitoyl cysteine lipidation. A lipid anchor (S-diacylglycerol cysteine) is attached at C17. The segment at 24–54 (TEQPATIEPAVPTPSKPQLPPSESQPLPTPP) is disordered. The segment covering 34-43 (VPTPSKPQLP) has biased composition (pro residues).

Belongs to the LpoB family. Interacts with PBP1b.

Its subcellular location is the cell outer membrane. In terms of biological role, regulator of peptidoglycan synthesis that is essential for the function of penicillin-binding protein 1B (PBP1b). This chain is Penicillin-binding protein activator LpoB, found in Dickeya dadantii (strain 3937) (Erwinia chrysanthemi (strain 3937)).